A 132-amino-acid polypeptide reads, in one-letter code: D-ribose pyranase (132 aa).

Histidine 20 serves as the catalytic Proton donor. Substrate is bound by residues aspartate 28, histidine 99, and 121 to 123 (YSN).

This sequence belongs to the RbsD / FucU family. RbsD subfamily. As to quaternary structure, homodecamer.

The protein localises to the cytoplasm. It catalyses the reaction beta-D-ribopyranose = beta-D-ribofuranose. The protein operates within carbohydrate metabolism; D-ribose degradation; D-ribose 5-phosphate from beta-D-ribopyranose: step 1/2. Catalyzes the interconversion of beta-pyran and beta-furan forms of D-ribose. The protein is D-ribose pyranase of Streptococcus agalactiae serotype V (strain ATCC BAA-611 / 2603 V/R).